Here is a 98-residue protein sequence, read N- to C-terminus: Keratin, high sulfur matrix protein, IIIB3 (98 aa).

A1 is subject to N-acetylalanine.

The protein belongs to the KRTAP type 3 family. As to quaternary structure, interacts with wool keratins. As to expression, wool.

In the wool cortex, wool keratin intermediate filaments are embedded in an interfilamentous matrix, consisting of hair keratin-associated proteins (KRTAP), which are essential for the formation of a rigid and resistant wool shaft through their extensive disulfide bond cross-linking with abundant cysteine residues of wool keratins. The matrix proteins include the high-sulfur and high-glycine-tyrosine keratins. The chain is Keratin, high sulfur matrix protein, IIIB3 from Ovis aries (Sheep).